The following is a 268-amino-acid chain: Tryptophan synthase alpha chain (268 aa).

Catalysis depends on proton acceptor residues Glu-49 and Asp-60.

Belongs to the TrpA family. As to quaternary structure, tetramer of two alpha and two beta chains.

The enzyme catalyses (1S,2R)-1-C-(indol-3-yl)glycerol 3-phosphate + L-serine = D-glyceraldehyde 3-phosphate + L-tryptophan + H2O. It participates in amino-acid biosynthesis; L-tryptophan biosynthesis; L-tryptophan from chorismate: step 5/5. The alpha subunit is responsible for the aldol cleavage of indoleglycerol phosphate to indole and glyceraldehyde 3-phosphate. This is Tryptophan synthase alpha chain from Escherichia coli O157:H7.